The sequence spans 227 residues: MGWTMRLVTAALLLGLMMVVTGDEDENSPCAHEALLDEDTLFCQGLEVFYPELGNIGCKVVPDCNNYRQKITSWMEPIVKFPGAVDGATYILVMVDPDAPSRAEPRQRFWRHWLVTDIKGADLKKGKIQGQELSAYQAPSPPAHSGFHRYQFFVYLQEGKVISLLPKENKTRGSWKMDRFLNRFHLGEPEASTQFMTQNYQDSPTLQAPRERASEPKHKNQAEIAAC.

An N-terminal signal peptide occupies residues 1–22 (MGWTMRLVTAALLLGLMMVVTG). Asparagine 169 carries N-linked (GlcNAc...) (complex) asparagine glycosylation. An important for secretion region spans residues 188 to 227 (EPEASTQFMTQNYQDSPTLQAPRERASEPKHKNQAEIAAC). Residues 202 to 227 (DSPTLQAPRERASEPKHKNQAEIAAC) form a disordered region. Positions 209 to 221 (PRERASEPKHKNQ) are enriched in basic and acidic residues.

It belongs to the phosphatidylethanolamine-binding protein family.

Its subcellular location is the secreted. Its function is as follows. Promotes AKT phosphorylation, suggesting a possible role in the PI3K-AKT signaling pathway. This Homo sapiens (Human) protein is Phosphatidylethanolamine-binding protein 4 (PEBP4).